The sequence spans 602 residues: Ligand-dependent nuclear receptor corepressor-like protein (602 aa).

A disordered region spans residues 104–124 (PSLDSSQSTPTEELSSQGQSN). Positions 106-124 (LDSSQSTPTEELSSQGQSN) are enriched in polar residues. Residues Lys242, Lys319, Lys340, and Lys397 each participate in a glycyl lysine isopeptide (Lys-Gly) (interchain with G-Cter in SUMO2) cross-link. 2 disordered regions span residues 495 to 521 (TVDG…KRGR) and 564 to 602 (ERSG…SKPV). The HTH psq-type domain maps to 516 to 568 (RKKRGRYRQYDHEIMEEAIAMVMSGKMSVSKAQGIYGVPHSTLEYKVKERSGT). The segment at residues 544–564 (VSKAQGIYGVPHSTLEYKVKE) is a DNA-binding region (H-T-H motif). Residues 585 to 602 (YNMTDSGTGSCKNSSKPV) show a composition bias toward polar residues.

It is found in the nucleus. May act as transcription activator that binds DNA elements with the sequence 5'-CCCTATCGATCGATCTCTACCT-3'. May play a role in spermatogenesis. The protein is Ligand-dependent nuclear receptor corepressor-like protein (LCORL) of Homo sapiens (Human).